The chain runs to 145 residues: D-aminoacyl-tRNA deacylase (145 aa).

A Gly-cisPro motif, important for rejection of L-amino acids motif is present at residues 137-138; that stretch reads GP.

The protein belongs to the DTD family. Homodimer.

Its subcellular location is the cytoplasm. It carries out the reaction glycyl-tRNA(Ala) + H2O = tRNA(Ala) + glycine + H(+). The catalysed reaction is a D-aminoacyl-tRNA + H2O = a tRNA + a D-alpha-amino acid + H(+). An aminoacyl-tRNA editing enzyme that deacylates mischarged D-aminoacyl-tRNAs. Also deacylates mischarged glycyl-tRNA(Ala), protecting cells against glycine mischarging by AlaRS. Acts via tRNA-based rather than protein-based catalysis; rejects L-amino acids rather than detecting D-amino acids in the active site. By recycling D-aminoacyl-tRNA to D-amino acids and free tRNA molecules, this enzyme counteracts the toxicity associated with the formation of D-aminoacyl-tRNA entities in vivo and helps enforce protein L-homochirality. This is D-aminoacyl-tRNA deacylase from Rhodococcus jostii (strain RHA1).